A 209-amino-acid chain; its full sequence is dITP/XTP pyrophosphatase (209 aa).

Residue 7–12 (SSHGYK) participates in substrate binding. Aspartate 70 (proton acceptor) is an active-site residue. Mg(2+) is bound at residue aspartate 70. Substrate contacts are provided by residues serine 71, 154–157 (FGYD), lysine 177, and 182–183 (HR).

It belongs to the HAM1 NTPase family. Homodimer. Mg(2+) serves as cofactor.

The catalysed reaction is XTP + H2O = XMP + diphosphate + H(+). The enzyme catalyses dITP + H2O = dIMP + diphosphate + H(+). It carries out the reaction ITP + H2O = IMP + diphosphate + H(+). In terms of biological role, pyrophosphatase that catalyzes the hydrolysis of nucleoside triphosphates to their monophosphate derivatives, with a high preference for the non-canonical purine nucleotides XTP (xanthosine triphosphate), dITP (deoxyinosine triphosphate) and ITP. Seems to function as a house-cleaning enzyme that removes non-canonical purine nucleotides from the nucleotide pool, thus preventing their incorporation into DNA/RNA and avoiding chromosomal lesions. This chain is dITP/XTP pyrophosphatase, found in Chlamydia muridarum (strain MoPn / Nigg).